Here is a 1342-residue protein sequence, read N- to C-terminus: DNA-directed RNA polymerase subunit beta (1342 aa).

This sequence belongs to the RNA polymerase beta chain family. In terms of assembly, the RNAP catalytic core consists of 2 alpha, 1 beta, 1 beta' and 1 omega subunit. When a sigma factor is associated with the core the holoenzyme is formed, which can initiate transcription.

The catalysed reaction is RNA(n) + a ribonucleoside 5'-triphosphate = RNA(n+1) + diphosphate. Its function is as follows. DNA-dependent RNA polymerase catalyzes the transcription of DNA into RNA using the four ribonucleoside triphosphates as substrates. The protein is DNA-directed RNA polymerase subunit beta of Histophilus somni (strain 129Pt) (Haemophilus somnus).